Here is a 482-residue protein sequence, read N- to C-terminus: tRNA sulfurtransferase (482 aa).

A THUMP domain is found at Leu-61 to Arg-165. ATP is bound by residues Leu-183 to Ile-184, Lys-265, Gly-287, and Gln-296. A disulfide bond links Cys-344 and Cys-456. In terms of domain architecture, Rhodanese spans Phe-404–Pro-482. Residue Cys-456 is the Cysteine persulfide intermediate of the active site.

Belongs to the ThiI family.

The protein resides in the cytoplasm. It catalyses the reaction [ThiI sulfur-carrier protein]-S-sulfanyl-L-cysteine + a uridine in tRNA + 2 reduced [2Fe-2S]-[ferredoxin] + ATP + H(+) = [ThiI sulfur-carrier protein]-L-cysteine + a 4-thiouridine in tRNA + 2 oxidized [2Fe-2S]-[ferredoxin] + AMP + diphosphate. It carries out the reaction [ThiS sulfur-carrier protein]-C-terminal Gly-Gly-AMP + S-sulfanyl-L-cysteinyl-[cysteine desulfurase] + AH2 = [ThiS sulfur-carrier protein]-C-terminal-Gly-aminoethanethioate + L-cysteinyl-[cysteine desulfurase] + A + AMP + 2 H(+). The protein operates within cofactor biosynthesis; thiamine diphosphate biosynthesis. In terms of biological role, catalyzes the ATP-dependent transfer of a sulfur to tRNA to produce 4-thiouridine in position 8 of tRNAs, which functions as a near-UV photosensor. Also catalyzes the transfer of sulfur to the sulfur carrier protein ThiS, forming ThiS-thiocarboxylate. This is a step in the synthesis of thiazole, in the thiamine biosynthesis pathway. The sulfur is donated as persulfide by IscS. This is tRNA sulfurtransferase from Escherichia coli (strain K12 / MC4100 / BW2952).